The sequence spans 695 residues: ATP-dependent zinc metalloprotease FTSH 2, chloroplastic (695 aa).

Residues 1-47 constitute a chloroplast transit peptide; sequence MAASSACLVGNGLSVNTTTKQRLSKHFSGRQTSFSSVIRTSKVNVVK. The transit peptide at 48–82 directs the protein to the thylakoid; the sequence is ASLDGKKKQEGRRDFLKILLGNAGVGLVASGKANA. Topologically, residues 83-167 are lumenal, thylakoid; that stretch reads DEQGVSSSRM…AHNAQEDQGS (85 aa). Residues 168 to 188 traverse the membrane as a helical segment; it reads VLFNLIGNLAFPALLIGGLFL. The Stromal portion of the chain corresponds to 189–695; that stretch reads LSRRSGGGMG…PASAPTPAAV (507 aa). 267-274 contributes to the ATP binding site; sequence GPPGTGKT. H488 contacts Zn(2+). E489 is a catalytic residue. Zn(2+) contacts are provided by H492 and D566. Residues 673-695 are disordered; that stretch reads PPENRVPSSTTTTPASAPTPAAV. The span at 679–695 shows a compositional bias: low complexity; sequence PSSTTTTPASAPTPAAV.

The protein in the N-terminal section; belongs to the AAA ATPase family. This sequence in the C-terminal section; belongs to the peptidase M41 family. Interacts with CHIP and FTSH5. Heterohexamers with FTSH1, FTSH5 and FTSH8. May also form homooligomers. It depends on Zn(2+) as a cofactor. In terms of processing, the FTSH2 precursor is ubiquitinated by CHIP in the cytoplasm. As to expression, expressed in cotyledons, cauline and rosette leaves, stems, sepals, flovers and siliques. Very low in roots.

The protein localises to the plastid. Its subcellular location is the chloroplast thylakoid membrane. In terms of biological role, part of a complex that function as an ATP-dependent zinc metallopeptidase. Involved in the thylakoid formation and in the removal of damaged D1 in the photosystem II, preventing cell death under high-intensity light conditions, but not involved in thermotolerance. The chain is ATP-dependent zinc metalloprotease FTSH 2, chloroplastic (FTSH2) from Arabidopsis thaliana (Mouse-ear cress).